The following is a 724-amino-acid chain: Coiled-coil domain-containing protein 175 (724 aa).

Coiled coils occupy residues 131-164 (VEMS…NTAL), 203-256 (INLE…RKET), 282-373 (VVLS…RQYK), 426-534 (ELHR…ERKL), and 565-627 (QLQV…QLRE).

The protein is Coiled-coil domain-containing protein 175 (CCDC175) of Bos taurus (Bovine).